Consider the following 537-residue polypeptide: MKLQVLVLVLLMSWFGVLSWVQAEFFTSIGHMTDLIYAEKDLVQSLKEYILVEEAKLAKIKSWASKMEALTSRSAADPEGYLAHPVNAYKLVKRLNTDWPALGDLVLQDASAGFVANLSVQRQFFPTDEDESGAARALMRLQDTYKLDPDTISRGELPGTKYQAMLSVDDCFGLGRSAYNEGDYYHTVLWMEQVLKQLDAGEEATVTKSLVLDYLSYAVFQLGDLHRAVELTRRLLSLDPSHERAGGNLRYFERLLEEERGKSLSNQTDAGLATQENLYERPTDYLPERDVYESLCRGEGVKLTPRRQKKLFCRYHHGNRVPQLLIAPFKEEDEWDSPHIVRYYDVMSDEEIERIKEIAKPKLARATVRDPKTGVLTVASYRVSKSSWLEEDDDPVVARVNRRMQHITGLTVKTAELLQVANYGMGGQYEPHFDFSRSDDEDAFKRLGTGNRVATFLNYMSDVEAGGATVFPDLGAAIWPKKGTAVFWYNLLRSGEGDYRTRHAACPVLVGCKWVSNKWFHERGQEFLRPCGTTEVD.

The N-terminal stretch at 1 to 23 (MKLQVLVLVLLMSWFGVLSWVQA) is a signal peptide. Residue Asn-117 is glycosylated (N-linked (GlcNAc...) asparagine). One copy of the TPR repeat lies at 209–242 (SLVLDYLSYAVFQLGDLHRAVELTRRLLSLDPSH). Residue Asn-266 is glycosylated (N-linked (GlcNAc...) asparagine). The region spanning 414-522 (TAELLQVANY…KWVSNKWFHE (109 aa)) is the Fe2OG dioxygenase domain. Residues His-432 and Asp-434 each coordinate Fe cation. The residue at position 482 (Lys-482) is an N6-succinyllysine. His-503 serves as a coordination point for Fe cation. Lys-513 is a binding site for 2-oxoglutarate.

Belongs to the P4HA family. Heterotetramer of two alpha-2 chains and two beta chains (P4HB) (the beta chain is the multi-functional PDI), where P4HB plays the role of a structural subunit; this tetramer catalyzes the formation of 4-hydroxyproline in collagen. Fe(2+) serves as cofactor. The cofactor is L-ascorbate. In terms of tissue distribution, expressed at least in brain, heart and lung.

It localises to the endoplasmic reticulum lumen. It catalyses the reaction L-prolyl-[collagen] + 2-oxoglutarate + O2 = trans-4-hydroxy-L-prolyl-[collagen] + succinate + CO2. Its activity is regulated as follows. Inhibited by poly(L-proline) only at very high concentrations. In terms of biological role, catalyzes the post-translational formation of 4-hydroxyproline in -Xaa-Pro-Gly- sequences in collagens and other proteins. The sequence is that of Prolyl 4-hydroxylase subunit alpha-2 (P4ha2) from Mus musculus (Mouse).